We begin with the raw amino-acid sequence, 353 residues long: Mitochondrial glutathione transporter SLC25A40 (353 aa).

Solcar repeat units follow at residues 14–132 (ITPF…LFAL), 140–224 (RSDL…GKWW), and 234–328 (PTVA…GKAF). 6 helical membrane-spanning segments follow: residues 20–40 (MMAS…LDVV), 104–124 (LWSG…IYFT), 143–163 (LAPL…ISPL), 200–221 (WGPT…YEKG), 237–257 (AITF…TLPF), and 299–319 (GLFA…AIMI).

Belongs to the mitochondrial carrier (TC 2.A.29) family.

The protein resides in the mitochondrion inner membrane. The catalysed reaction is glutathione(in) = glutathione(out). Its function is as follows. Probable mitochondrial transporter required for glutathione import into mitochondria. Glutathione, which plays key roles in oxidative metabolism, is produced exclusively in the cytosol and is imported in many organelles. Mitochondrial glutathione is required for the activity and stability of proteins containing iron-sulfur clusters. The polypeptide is Mitochondrial glutathione transporter SLC25A40 (Danio rerio (Zebrafish)).